Reading from the N-terminus, the 207-residue chain is Uracil phosphoribosyltransferase (207 aa).

5-phospho-alpha-D-ribose 1-diphosphate-binding positions include R77, R102, and 129-137; that span reads DPMLATGGS. Uracil is bound by residues I192 and 197–199; that span reads GDA. D198 provides a ligand contact to 5-phospho-alpha-D-ribose 1-diphosphate.

Belongs to the UPRTase family. Mg(2+) serves as cofactor.

The enzyme catalyses UMP + diphosphate = 5-phospho-alpha-D-ribose 1-diphosphate + uracil. The protein operates within pyrimidine metabolism; UMP biosynthesis via salvage pathway; UMP from uracil: step 1/1. With respect to regulation, allosterically activated by GTP. In terms of biological role, catalyzes the conversion of uracil and 5-phospho-alpha-D-ribose 1-diphosphate (PRPP) to UMP and diphosphate. In Ureaplasma parvum serovar 3 (strain ATCC 27815 / 27 / NCTC 11736), this protein is Uracil phosphoribosyltransferase.